A 283-amino-acid polypeptide reads, in one-letter code: Transmembrane protein 45B (283 aa).

Transmembrane regions (helical) follow at residues 7–27, 55–75, 99–119, 121–141, 153–173, 187–207, and 218–238; these read HALP…KCPF, LIEG…EQFV, MYLF…SHHV, VGLD…LFYF, IHSL…MEVF, LAIL…PLSG, and IMFI…IVGI. The disordered stretch occupies residues 261-283; that stretch reads GLRKSTSTDSSSQKALLQESDEE. Polar residues predominate over residues 264 to 275; the sequence is KSTSTDSSSQKA.

The protein belongs to the TMEM45 family.

It is found in the membrane. The sequence is that of Transmembrane protein 45B (tmem45b) from Danio rerio (Zebrafish).